The following is a 3394-amino-acid chain: Protein PFC0760c (3394 aa).

Low complexity-rich tracts occupy residues 471 to 508 (NNNDNDNNNDNNNNNNNNNDNNNNNNNDNNNNNNNYNN), 515 to 528 (NMNSGNHPNSNNLH), and 786 to 841 (NNQN…NQNN). Disordered stretches follow at residues 471-539 (NNND…DENN), 779-844 (MSSN…NAGI), 1038-1099 (NKKK…NNDD), 1892-1918 (TTTTTNNNNNNDNNNDNNNDNNDNNND), 2648-2693 (KMDL…DNHL), 2835-2909 (AKNE…NSNN), 3000-3057 (VSVG…DVNT), and 3107-3394 (DYVN…NSEE). Positions 1038–1097 (NKKKNNDGDNKSQEDDDGNKKKNNDGDNKSQEDDDGNKKKNNDGDNKSQEDDYGNKKKNN) are enriched in basic and acidic residues. Acidic residues predominate over residues 2657 to 2671 (GDDDDDDDDDDDDDN). Over residues 2672–2686 (NNNNNNNNNNNNNNM) the composition is skewed to low complexity. The span at 2836-2846 (KNENYPVSTHY) shows a compositional bias: polar residues. 2 stretches are compositionally biased toward low complexity: residues 2855–2865 (DNINNDNNNDN) and 2872–2909 (NDNINNDNNNDNINNDNINNDNINNDNNNDNNNDNSNN). Acidic residues-rich tracts occupy residues 3007-3047 (DNND…EEKE) and 3147-3257 (DDDE…DDND). Positions 3258 to 3292 (NDHNDDNNDEEKYSCHDDKNEHTNNDLLNIDHDNN) are enriched in basic and acidic residues. Residues 3300-3309 (LYSTYNVSVS) are compositionally biased toward polar residues. The segment covering 3310–3320 (HNKDPSNKENE) has biased composition (basic and acidic residues). The segment covering 3321–3330 (IQNLISIDSS) has biased composition (polar residues). Residues 3331–3379 (NENDENDENDENDENDENDENDENDENDENDENDEKDENDENDENDENF) show a composition bias toward acidic residues. The segment covering 3385–3394 (GTLNEMNSEE) has biased composition (polar residues).

This chain is Protein PFC0760c, found in Plasmodium falciparum (isolate 3D7).